We begin with the raw amino-acid sequence, 393 residues long: MVAAAPSNKERLPDMMTSIRLDQSGRVEIIDQLLLPHSVVWMPVSTPEEAFDAIKTMRIRGAPAIASLAALTLRSYLSSSSSPVSSSSSSSDVISWVGQTIDYLQSSRPTAVNLGEAMDRIRAALKDSEAQNQTAGDIIQRVKKICGDVHDEDLERNMKMGRLGAEWLWKKRGGGKKGLKVMTVCNTGSLATSGYGTAIGVITALFQEDHLDTAYYAQTTPYHQGSRLTSLELTTLQIPACMICDTMLGSLFQHEDIDGVIVGADRVVKNGDTANKIGTYQAAVLAQRHNVPFMVVAPVTTIDLSLPTGAEIHIEHRPAAEATQVRGLDTETGKLSVVRITPEGVGEGDKPWQRVYNPSFDVTPAELISAVVTEKGVAERKEGEKSIDVASIC.

Residue Asp265 is the Proton donor of the active site.

This sequence belongs to the eIF-2B alpha/beta/delta subunits family. MtnA subfamily.

It is found in the cytoplasm. The protein localises to the nucleus. It catalyses the reaction 5-(methylsulfanyl)-alpha-D-ribose 1-phosphate = 5-(methylsulfanyl)-D-ribulose 1-phosphate. It functions in the pathway amino-acid biosynthesis; L-methionine biosynthesis via salvage pathway; L-methionine from S-methyl-5-thio-alpha-D-ribose 1-phosphate: step 1/6. Catalyzes the interconversion of methylthioribose-1-phosphate (MTR-1-P) into methylthioribulose-1-phosphate (MTRu-1-P). The protein is Methylthioribose-1-phosphate isomerase of Cryptococcus neoformans var. neoformans serotype D (strain JEC21 / ATCC MYA-565) (Filobasidiella neoformans).